Reading from the N-terminus, the 665-residue chain is SH3 domain-containing kinase-binding protein 1 (665 aa).

2 consecutive SH3 domains span residues 1 to 58 (MVEA…EIKK) and 98 to 157 (RRRR…ELSG). Residues Ser-156, Ser-159, Ser-183, and Ser-230 each carry the phosphoserine modification. The segment at 159–200 (SDELGISQDEQLSKSSLRETTGSESDGGDSSSTKSEGANGTV) is disordered. The span at 177–195 (ETTGSESDGGDSSSTKSEG) shows a compositional bias: low complexity. Residue Thr-254 is modified to Phosphothreonine. The region spanning 267 to 328 (KSKDYCKVIF…PDNFVKLLPP (62 aa)) is the SH3 3 domain. 2 disordered regions span residues 328 to 444 (PDFE…LAGS) and 467 to 610 (DSVV…AAVE). The span at 355–390 (TERKHEIKKIPPERPEMLPNRTEEKERPEREPKLDL) shows a compositional bias: basic and acidic residues. Ser-436 is modified (phosphoserine). Polar residues predominate over residues 469–484 (VVSSTEKLSHPTTSRP). The segment covering 491-510 (PPSQSLTSSSLSSPDIFDSP) has biased composition (low complexity). 3 positions are modified to phosphoserine: Ser-509, Ser-511, and Ser-521. Residues 517–531 (EEHISLAHRGVDASK) are compositionally biased toward basic and acidic residues. A compositionally biased stretch (polar residues) spans 535–546 (KTVTISQVSDNK). Residues 564–582 (APLSSAAPSPLSSSLGTAG) show a composition bias toward low complexity. Ser-587 is modified (phosphoserine). Positions 602 to 664 (AASSQAAVEE…VNDIKKALQS (63 aa)) form a coiled coil.

Can self-associate and form homotetramers. Interacts with CD2, F-actin capping protein, PIK3R3, GRB2, EGFR, MET, BLNK, MAP3K4, PDCD6IP, SPRY2, ARHGAP17, ARHGAP27, MAGI2, CRK, BCAR1, SOS1, ASAP1, ARAP3, HIP1R, SYNJ2, INPP5D and STAP1. Interacts with E3 ubiquitin-protein ligases CBL and CBLB, but does not interact with CBLC. Two molecules of SH3KBP1 seem to bind through their respective SH3 1 domain to one molecule of CBLB. The interaction with CBL or CBLB and EGFR is increased upon EGF stimulation. The interaction with CBL is attenuated by PDCD6IP. Interacts (via SH3 domains) with ARAP1. The interaction is independent of EGF and does not affect ARAP1 GTPase-activating activity but is involved in regulating ubiquitination and endocytic trafficking of EGFR. ARAP1 competes with CBL for binding to SH3KBP1 and prevents interaction of CBL with SH3KBP1; this is likely to regulate SH3KBP1-mediated internalization of EGFR. Interacts through its proline-rich region with the SH3 domain of endophilins SH3GL1, SH3GL2 and SH3GL3. The SH3KBP1-endophilin complex seems to associate with a complex containing the phosphorylated receptor (EGFR or MET) and phosphorylated CBL. Probably associates with ASAP1 and phosphorylated EGFR. Probably part of a complex consisting of at least SH3KBP1, ASAP1 and ARAP3. Interacts with focal adhesion kinases PTK2/FAK1 and PTK2B/PYK2, probably as a dimer. Interacts with DAB2 and probably associates with chathrin through its interaction with DAB2. Part of a complex consisting of SH3KBP1, DAB2, and clathrin heavy chain. DAB2 and clathrin dissociate from SH3KBP1 following growth factor treatment, enabling interaction with CBL. Interacts with DDN and probably associates with MAGI2 through its interaction with DDN. Interacts with the SH3 domains of SRC tyrosine-protein kinases SRC, LCK, LYN, FGR, FYN and HCK. Interacts with TRADD, BIRC2, TRAF1, TRAF2 and TNFR1, and the association with a TNFR1-associated complex upon stimulation with TNF-alpha seems to be mediated by SRC. Interacts (via SH3 domains) with SHKBP1 (via PXXXPR motifs). Interaction with CBL is abolished in the presence of SHKBP1. Interacts (via SH3 domains) with ZFP36 (via extreme C-terminal region). Interacts with MAP3K4; this interaction enhances the association with ZFP36. As to quaternary structure, (Microbial infection) Interacts (via SH3 domains) with Chikungunya virus non-structural protein 3 (via C-terminus); this interaction plays a role in initiation of viral replication. Monoubiquitinated by CBL and CBLB after EGF stimulation; probably on its C-terminus. As to expression, ubiquitously expressed. Also expressed in some cancer cell lines.

It is found in the cytoplasm. The protein localises to the cytoskeleton. Its subcellular location is the cytoplasmic vesicle membrane. The protein resides in the synapse. It localises to the synaptosome. It is found in the cell junction. The protein localises to the focal adhesion. In terms of biological role, adapter protein involved in regulating diverse signal transduction pathways. Involved in the regulation of endocytosis and lysosomal degradation of ligand-induced receptor tyrosine kinases, including EGFR and MET/hepatocyte growth factor receptor, through an association with CBL and endophilins. The association with CBL, and thus the receptor internalization, may be inhibited by an interaction with PDCD6IP and/or SPRY2. Involved in regulation of ligand-dependent endocytosis of the IgE receptor. Attenuates phosphatidylinositol 3-kinase activity by interaction with its regulatory subunit. May be involved in regulation of cell adhesion; promotes the interaction between TTK2B and PDCD6IP. May be involved in the regulation of cellular stress response via the MAPK pathways through its interaction with MAP3K4. Is involved in modulation of tumor necrosis factor mediated apoptosis. Plays a role in the regulation of cell morphology and cytoskeletal organization. Required in the control of cell shape and migration. Has an essential role in the stimulation of B cell activation. This is SH3 domain-containing kinase-binding protein 1 (SH3KBP1) from Homo sapiens (Human).